The sequence spans 323 residues: Pantothenate kinase (323 aa).

101 to 108 serves as a coordination point for ATP; sequence GSVAVGKS.

Belongs to the prokaryotic pantothenate kinase family.

The protein resides in the cytoplasm. It catalyses the reaction (R)-pantothenate + ATP = (R)-4'-phosphopantothenate + ADP + H(+). It functions in the pathway cofactor biosynthesis; coenzyme A biosynthesis; CoA from (R)-pantothenate: step 1/5. This Paenarthrobacter aurescens (strain TC1) protein is Pantothenate kinase.